Here is an 833-residue protein sequence, read N- to C-terminus: Leucine--tRNA ligase (833 aa).

A 'HIGH' region motif is present at residues 41 to 52 (PYPSGAGLHVGH). Positions 610–614 (KMSKS) match the 'KMSKS' region motif. An ATP-binding site is contributed by lysine 613.

The protein belongs to the class-I aminoacyl-tRNA synthetase family.

It is found in the cytoplasm. It carries out the reaction tRNA(Leu) + L-leucine + ATP = L-leucyl-tRNA(Leu) + AMP + diphosphate. The protein is Leucine--tRNA ligase of Streptococcus pyogenes serotype M49 (strain NZ131).